The primary structure comprises 95 residues: Mitochondrial import inner membrane translocase subunit TIM13 (95 aa).

The Twin CX3C motif signature appears at 47–67 (CFEKCLQSPYKDGNEGCVDQC). 2 cysteine pairs are disulfide-bonded: Cys47–Cys67 and Cys51–Cys63.

Belongs to the small Tim family. In terms of assembly, heterohexamer; composed of 3 copies of TIM8 and 3 copies of TIM13, named soluble 70 kDa complex. Associates with the TIM22 complex, whose core is composed of TIM22 and TIM54. Interacts with the transmembrane regions of multi-pass transmembrane proteins in transit.

The protein resides in the mitochondrion inner membrane. Its function is as follows. Mitochondrial intermembrane chaperone that participates in the import and insertion of some multi-pass transmembrane proteins into the mitochondrial inner membrane. Also required for the transfer of beta-barrel precursors from the TOM complex to the sorting and assembly machinery (SAM complex) of the outer membrane. Acts as a chaperone-like protein that protects the hydrophobic precursors from aggregation and guide them through the mitochondrial intermembrane space. The TIM8-TIM13 complex is non essential and only mediates the import of few proteins, while the predominant TIM9-TIM10 70 kDa complex is crucial and mediates the import of much more proteins. The chain is Mitochondrial import inner membrane translocase subunit TIM13 (TIM13) from Candida glabrata (strain ATCC 2001 / BCRC 20586 / JCM 3761 / NBRC 0622 / NRRL Y-65 / CBS 138) (Yeast).